A 274-amino-acid polypeptide reads, in one-letter code: uncharacterized protein (274 aa).

The next 5 membrane-spanning stretches (helical) occupy residues 9 to 29 (SLLLTEVAAYFTSTTLFVSIL), 64 to 84 (WFWHFYAFISLLNPLFTFFIL), 135 to 155 (LAGHYLLGYLFYTHTFLALLL), 165 to 185 (MSSMQFVGLGIYAIGSIWQNA), and 219 to 239 (IIVYTGIALIAQHWLIWLVLG).

The protein belongs to the steroid 5-alpha reductase family.

The protein localises to the endoplasmic reticulum membrane. This is an uncharacterized protein from Schizosaccharomyces pombe (strain 972 / ATCC 24843) (Fission yeast).